A 33-amino-acid polypeptide reads, in one-letter code: Brevinin-2Ea (33 aa).

Cys27 and Cys33 are disulfide-bonded.

Belongs to the frog skin active peptide (FSAP) family. Brevinin subfamily. In terms of tissue distribution, expressed by the skin glands.

Its subcellular location is the secreted. In terms of biological role, shows antibacterial activity against representative Gram-negative and Gram-positive bacterial species, and hemolytic activity. This Pelophylax lessonae (Pool frog) protein is Brevinin-2Ea.